The chain runs to 130 residues: Glycine cleavage system H protein (130 aa).

In terms of domain architecture, Lipoyl-binding spans 25 to 106 (TALIGISDFA…PFDSWMIKVK (82 aa)). K66 carries the post-translational modification N6-lipoyllysine.

It belongs to the GcvH family. As to quaternary structure, the glycine cleavage system is composed of four proteins: P, T, L and H. The cofactor is (R)-lipoate.

Functionally, the glycine cleavage system catalyzes the degradation of glycine. The H protein shuttles the methylamine group of glycine from the P protein to the T protein. The polypeptide is Glycine cleavage system H protein (Leptospira borgpetersenii serovar Hardjo-bovis (strain JB197)).